We begin with the raw amino-acid sequence, 195 residues long: Interferon tau (195 aa).

A signal peptide spans 1–23 (MAFVLSLRMALVLVSYCPGGSLG). 2 cysteine pairs are disulfide-bonded: C24–C122 and C52–C162. N-linked (GlcNAc...) asparagine glycosylation occurs at N101.

This sequence belongs to the alpha/beta interferon family. IFN-alphaII subfamily. As to expression, constitutively and exclusively expressed in the mononuclear cells of the extraembryonic trophectoderm.

It is found in the secreted. Its function is as follows. Paracrine hormone primarily responsible for maternal recognition of pregnancy. Interacts with endometrial receptors, probably type I interferon receptors, and blocks estrogen receptor expression, preventing the estrogen-induced increase in oxytocin receptor expression in the endometrium. This results in the suppression of the pulsatile endometrial release of the luteolytic hormone prostaglandin F2-alpha, hindering the regression of the corpus luteum (luteolysis) and therefore a return to ovarian cyclicity. This, and a possible direct effect of IFN-tau on prostaglandin synthesis, leads in turn to continued ovarian progesterone secretion, which stimulates the secretion by the endometrium of the nutrients required for the growth of the conceptus. In summary, displays particularly high antiviral and antiproliferative potency concurrently with particular weak cytotoxicity, high antiluteolytic activity and immunomodulatory properties. In contrast with other IFNs, IFN-tau is not virally inducible. The chain is Interferon tau (IFNT) from Ovibos moschatus (Muskox).